Consider the following 386-residue polypeptide: 8-amino-7-oxononanoate synthase (386 aa).

Arg-19 serves as a coordination point for substrate. Residue 106–107 (GY) coordinates pyridoxal 5'-phosphate. His-131 is a substrate binding site. Positions 177, 205, and 233 each coordinate pyridoxal 5'-phosphate. Lys-236 is subject to N6-(pyridoxal phosphate)lysine. Position 350 (Thr-350) interacts with substrate.

Belongs to the class-II pyridoxal-phosphate-dependent aminotransferase family. BioF subfamily. As to quaternary structure, homodimer. It depends on pyridoxal 5'-phosphate as a cofactor.

The catalysed reaction is 6-carboxyhexanoyl-[ACP] + L-alanine + H(+) = (8S)-8-amino-7-oxononanoate + holo-[ACP] + CO2. The protein operates within cofactor biosynthesis; biotin biosynthesis. Catalyzes the decarboxylative condensation of pimeloyl-[acyl-carrier protein] and L-alanine to produce 8-amino-7-oxononanoate (AON), [acyl-carrier protein], and carbon dioxide. The chain is 8-amino-7-oxononanoate synthase from Alcanivorax borkumensis (strain ATCC 700651 / DSM 11573 / NCIMB 13689 / SK2).